The chain runs to 100 residues: Integration host factor subunit alpha (100 aa).

Positions 53–72 are disordered; sequence FQLRDKPQRPGRNPKTGEEV.

The protein belongs to the bacterial histone-like protein family. As to quaternary structure, heterodimer of an alpha and a beta chain.

Its function is as follows. This protein is one of the two subunits of integration host factor, a specific DNA-binding protein that functions in genetic recombination as well as in transcriptional and translational control. The polypeptide is Integration host factor subunit alpha (Neisseria meningitidis serogroup C (strain 053442)).